Here is an 835-residue protein sequence, read N- to C-terminus: Cap-specific mRNA (nucleoside-2'-O-)-methyltransferase 1 (835 aa).

Residues 2-19 (RRRNDPECTAPIKKQKKR) carry the Bipartite nuclear localization signal motif. The interval 24-68 (ALNLSAASGDEPPSSVNHAAKASTTSLSGSDSETEGKQHGSDSFD) is disordered. Phosphoserine occurs at positions 28, 31, 53, 66, and 91. A compositionally biased stretch (polar residues) spans 37 to 54 (SSVNHAAKASTTSLSGSD). Basic and acidic residues predominate over residues 57–68 (TEGKQHGSDSFD). Residues 87-133 (YNSVSQKLMAKMGFREGEGLGKYSQGRKDIVEASNQKGRRGLGLTLQ) form the G-patch domain. An N6-acetyllysine modification is found at Lys108. Residues 203–207 (KSVFD) and Arg218 each bind substrate. A RrmJ-type SAM-dependent 2'-O-MTase domain is found at 231–450 (FFLNRAAMKM…ERYVVCKGLK (220 aa)). S-adenosyl-L-methionine is bound at residue Asn234. Residue Lys239 is part of the active site. Residues 277-283 (CAGPGGF) and 335-336 (DI) contribute to the S-adenosyl-L-methionine site. Asp364 is an active-site residue. 374-376 (NLQ) provides a ligand contact to substrate. Catalysis depends on Lys404, which acts as the Proton acceptor. Residue Asn439 participates in substrate binding. Residues 727–835 (SSGTPKLSYT…VLSFIQTHSA (109 aa)) are interaction with POLR2A. The 35-residue stretch at 752 to 786 (RTVNEPWTMGFSKSFKRKFFYNKKTKISTFDLPAD) folds into the WW domain.

In terms of assembly, interacts with POLR2A (via C-terminus).

It localises to the nucleus. The enzyme catalyses a 5'-end (N(7)-methyl 5'-triphosphoguanosine)-ribonucleoside in mRNA + S-adenosyl-L-methionine = a 5'-end (N(7)-methyl 5'-triphosphoguanosine)-(2'-O-methyl-ribonucleoside) in mRNA + S-adenosyl-L-homocysteine + H(+). Functionally, S-adenosyl-L-methionine-dependent methyltransferase that mediates mRNA cap1 2'-O-ribose methylation to the 5'-cap structure of mRNAs. Methylates the ribose of the first nucleotide of a m(7)GpppG-capped mRNA and small nuclear RNA (snRNA) to produce m(7)GpppRm (cap1). Displays a preference for cap0 transcripts. Cap1 modification is linked to higher levels of translation. May be involved in the interferon response pathway. This is Cap-specific mRNA (nucleoside-2'-O-)-methyltransferase 1 (CMTR1) from Ailuropoda melanoleuca (Giant panda).